A 509-amino-acid chain; its full sequence is ATP synthase subunit alpha (509 aa).

169–176 is a binding site for ATP; that stretch reads GDRQTGKT.

It belongs to the ATPase alpha/beta chains family. F-type ATPases have 2 components, CF(1) - the catalytic core - and CF(0) - the membrane proton channel. CF(1) has five subunits: alpha(3), beta(3), gamma(1), delta(1), epsilon(1). CF(0) has three main subunits: a(1), b(2) and c(9-12). The alpha and beta chains form an alternating ring which encloses part of the gamma chain. CF(1) is attached to CF(0) by a central stalk formed by the gamma and epsilon chains, while a peripheral stalk is formed by the delta and b chains.

It is found in the cell inner membrane. The catalysed reaction is ATP + H2O + 4 H(+)(in) = ADP + phosphate + 5 H(+)(out). In terms of biological role, produces ATP from ADP in the presence of a proton gradient across the membrane. The alpha chain is a regulatory subunit. The sequence is that of ATP synthase subunit alpha from Novosphingobium aromaticivorans (strain ATCC 700278 / DSM 12444 / CCUG 56034 / CIP 105152 / NBRC 16084 / F199).